A 758-amino-acid polypeptide reads, in one-letter code: 1-phosphatidylinositol 4,5-bisphosphate phosphodiesterase delta-4 (758 aa).

The PH domain occupies 16-124; it reads QLMQAGSPMR…WIQGLEKLIE (109 aa). Residues 26–53 are substrate binding; sequence KVKSRSWKKQRYFKLQEDCMTIWYNSKK. 3 consecutive EF-hand domains span residues 134–169, 170–205, and 206–237; these read LMDQWICDWFQKADKNKDGRMNFKEVQDLLKMMNVD, MSEHHAFRLFQMADKSESGTLEGEEFVLFYKALTQR, and DEVLKIFQDFSKDGKKLTLLEFVDFLQQGQLE. 10 residues coordinate Ca(2+): aspartate 147, asparagine 149, aspartate 151, arginine 153, glutamate 158, aspartate 183, serine 185, serine 187, threonine 189, and glutamate 194. Positions 213-243 match the GBA motif; the sequence is QDFSKDGKKLTLLEFVDFLQQGQLEEENTEE. Residues 290-435 enclose the PI-PLC X-box domain; sequence QDMMQPLCHY…LRGKILLKGK (146 aa). The active site involves histidine 305. Ca(2+) contacts are provided by asparagine 306, glutamate 335, and aspartate 337. Histidine 350 is a catalytic residue. Glutamate 384 is a binding site for Ca(2+). Positions 433 and 435 each coordinate substrate. Positions 446–468 are enriched in acidic residues; that stretch reads EQPDDSLGEVSDEEENIEVEEER. The disordered stretch occupies residues 446-479; it reads EQPDDSLGEVSDEEENIEVEEERNEDKKRAKKSK. The PI-PLC Y-box domain maps to 486 to 602; that stretch reads LSDCVIYCKS…GYVLKPSFMR (117 aa). Residues serine 515 and arginine 542 each coordinate substrate. The region spanning 602–731 is the C2 domain; that stretch reads RHVETTFNPD…SGYRHIHLLS (130 aa). Ca(2+)-binding residues include isoleucine 645, aspartate 647, asparagine 671, aspartate 700, tyrosine 701, and aspartate 702. The short motif at 726 to 729 is the PDZ-binding element; it reads HIHL.

Ca(2+) is required as a cofactor.

It is found in the membrane. It localises to the nucleus. The protein localises to the cytoplasm. Its subcellular location is the endoplasmic reticulum. It carries out the reaction a 1,2-diacyl-sn-glycero-3-phospho-(1D-myo-inositol-4,5-bisphosphate) + H2O = 1D-myo-inositol 1,4,5-trisphosphate + a 1,2-diacyl-sn-glycerol + H(+). The catalysed reaction is a 1,2-diacyl-sn-glycero-3-phospho-(1D-myo-inositol) + H2O = 1D-myo-inositol 1-phosphate + a 1,2-diacyl-sn-glycerol + H(+). In terms of biological role, hydrolyzes the phosphatidylinositol 4,5-bisphosphate (PIP2) to generate 2 second messenger molecules diacylglycerol (DAG) and inositol 1,4,5-trisphosphate (IP3). DAG mediates the activation of protein kinase C (PKC), while IP3 releases Ca(2+) from intracellular stores. This chain is 1-phosphatidylinositol 4,5-bisphosphate phosphodiesterase delta-4 (plcd4), found in Xenopus laevis (African clawed frog).